Reading from the N-terminus, the 121-residue chain is Basic phospholipase A2 homolog zhaoermiatoxin (121 aa).

7 cysteine pairs are disulfide-bonded: cysteine 26–cysteine 115, cysteine 28–cysteine 44, cysteine 43–cysteine 95, cysteine 49–cysteine 121, cysteine 50–cysteine 88, cysteine 57–cysteine 81, and cysteine 75–cysteine 86.

This sequence belongs to the phospholipase A2 family. Group II subfamily. R49 sub-subfamily. Homodimer. As to expression, expressed by the venom gland.

The protein localises to the secreted. Functionally, snake venom phospholipase A2 homolog that induces myonecrosis, and edema. Has low myotoxic activity. The sequence is that of Basic phospholipase A2 homolog zhaoermiatoxin from Protobothrops mangshanensis (Mangshan pitviper).